A 185-amino-acid chain; its full sequence is Ribosome-recycling factor (185 aa).

Belongs to the RRF family.

The protein resides in the cytoplasm. Responsible for the release of ribosomes from messenger RNA at the termination of protein biosynthesis. May increase the efficiency of translation by recycling ribosomes from one round of translation to another. This is Ribosome-recycling factor from Desulfatibacillum aliphaticivorans.